We begin with the raw amino-acid sequence, 146 residues long: MGTVLAFDFGEKRIGVATGETMLCSAHPLTTIHAESNEDRFAAIGKLVAEWQPEQLVVGLPTHADGTPHEMTRLATKFGERLARRFNLPVSFADERLTSLDAEARLRETGRNSKSAKPLLDAVAAQLILQTWFESPHHVIPTQPSA.

This sequence belongs to the YqgF nuclease family.

The protein localises to the cytoplasm. Functionally, could be a nuclease involved in processing of the 5'-end of pre-16S rRNA. In Dechloromonas aromatica (strain RCB), this protein is Putative pre-16S rRNA nuclease.